A 276-amino-acid polypeptide reads, in one-letter code: Omega-amidase NIT2-A (276 aa).

In terms of domain architecture, CN hydrolase spans 4–248 (FKLSLVQFLV…ETVLSAEIDL (245 aa)). The active-site Proton acceptor is E43. K112 serves as the catalytic Proton donor. The active-site Nucleophile is the C153.

It belongs to the carbon-nitrogen hydrolase superfamily. NIT1/NIT2 family. Homodimer.

The protein localises to the cytoplasm. It catalyses the reaction 2-oxoglutaramate + H2O = 2-oxoglutarate + NH4(+). The enzyme catalyses 2-oxosuccinamate + H2O = oxaloacetate + NH4(+). Its function is as follows. Has omega-amidase activity. The role of omega-amidase is to remove potentially toxic intermediates by converting 2-oxoglutaramate and 2-oxosuccinamate to biologically useful 2-oxoglutarate and oxaloacetate, respectively. In Xenopus laevis (African clawed frog), this protein is Omega-amidase NIT2-A (nit2a).